Reading from the N-terminus, the 132-residue chain is Large ribosomal subunit protein bL17 (132 aa).

It belongs to the bacterial ribosomal protein bL17 family. In terms of assembly, part of the 50S ribosomal subunit. Contacts protein L32.

The chain is Large ribosomal subunit protein bL17 from Polaromonas sp. (strain JS666 / ATCC BAA-500).